Consider the following 325-residue polypeptide: MSAPFVLAVPSKGRLQENTEAFFARAGLKLSKAGGARDYRGTIAGLDNVEVAYLSASEIAAQLSRGLAHLGVTGEDLVRENIADADKRVSLIEGLGFGYADVVVAVPQAWIDVRTMADLDDVTTGFREQHHMRMRVATKFVNLTRAFFQNHGITDYRIVESAGATEGAPAAGSAELIVDITTTGATLAANGLRVLDDGMILRSQANLVASRDADWSPQARETARVILDHIAARARANKYREVRTRFRQCDAALLGEAHSRFGVEAPFGGPTSSGMLTLHCPPGQLYALASFLREHGAETVSVVSLDYVFDRENPLFAKLEAFLRR.

This sequence belongs to the ATP phosphoribosyltransferase family. Long subfamily. The cofactor is Mg(2+).

It is found in the cytoplasm. It carries out the reaction 1-(5-phospho-beta-D-ribosyl)-ATP + diphosphate = 5-phospho-alpha-D-ribose 1-diphosphate + ATP. Its pathway is amino-acid biosynthesis; L-histidine biosynthesis; L-histidine from 5-phospho-alpha-D-ribose 1-diphosphate: step 1/9. Its activity is regulated as follows. Feedback inhibited by histidine. Its function is as follows. Catalyzes the condensation of ATP and 5-phosphoribose 1-diphosphate to form N'-(5'-phosphoribosyl)-ATP (PR-ATP). Has a crucial role in the pathway because the rate of histidine biosynthesis seems to be controlled primarily by regulation of HisG enzymatic activity. In Bradyrhizobium diazoefficiens (strain JCM 10833 / BCRC 13528 / IAM 13628 / NBRC 14792 / USDA 110), this protein is ATP phosphoribosyltransferase.